The sequence spans 160 residues: Small ribosomal subunit protein uS9 (160 aa).

The protein belongs to the universal ribosomal protein uS9 family.

The protein is Small ribosomal subunit protein uS9 of Cereibacter sphaeroides (strain ATCC 17029 / ATH 2.4.9) (Rhodobacter sphaeroides).